Consider the following 468-residue polypeptide: UDP-N-acetylmuramoyl-L-alanine--L-glutamate ligase (468 aa).

Residue 122-128 (GTKGKST) participates in ATP binding.

The protein belongs to the MurCDEF family. MurD2 subfamily.

Its subcellular location is the cytoplasm. The enzyme catalyses UDP-N-acetyl-alpha-D-muramoyl-L-alanine + L-glutamate + ATP = UDP-N-acetyl-alpha-D-muramoyl-L-alanyl-L-glutamate + ADP + phosphate + H(+). It functions in the pathway cell wall biogenesis; peptidoglycan biosynthesis. Functionally, cell wall formation. Catalyzes the addition of L-glutamate to the nucleotide precursor UDP-N-acetylmuramoyl-L-alanine. Has weak activity with D-glutamate. The protein is UDP-N-acetylmuramoyl-L-alanine--L-glutamate ligase of Xanthomonas oryzae pv. oryzae (strain MAFF 311018).